The primary structure comprises 101 residues: UPF0473 protein EF_1204 (101 aa).

The protein belongs to the UPF0473 family.

The chain is UPF0473 protein EF_1204 from Enterococcus faecalis (strain ATCC 700802 / V583).